The following is a 192-amino-acid chain: MNTIWIAVGALTFLGLVFGAILGYASRRFAVEDDPVVEKIDAILPQSQCGQCGYPGCRPYAEAVGLQGEKINRCAPGGEAVMLKIADLLNVEPQPCDAEEQQAAPVRMLAVIDENHCIGCTKCIQACPVDAIVGATRAMHTVMSDLCTGCNLCVDPCPTHCIELRPVNETPDSWKWDLNTIPVRIIPVEQHA.

The segment at 1-26 (MNTIWIAVGALTFLGLVFGAILGYAS) is hydrophobic. One can recognise a 4Fe-4S domain in the interval 32 to 91 (EDDPVVEKIDAILPQSQCGQCGYPGCRPYAEAVGLQGEKINRCAPGGEAVMLKIADLLNV). Cysteine 49, cysteine 52, cysteine 57, cysteine 74, cysteine 117, cysteine 120, cysteine 123, cysteine 127, cysteine 147, cysteine 150, cysteine 153, and cysteine 157 together coordinate [4Fe-4S] cluster. 4Fe-4S ferredoxin-type domains are found at residues 108-137 (MLAV…GATR) and 138-167 (AMHT…LRPV).

Belongs to the 4Fe4S bacterial-type ferredoxin family. RnfB subfamily. As to quaternary structure, the complex is composed of six subunits: RsxA, RsxB, RsxC, RsxD, RsxE and RsxG. The cofactor is [4Fe-4S] cluster.

Its subcellular location is the cell inner membrane. Its function is as follows. Part of a membrane-bound complex that couples electron transfer with translocation of ions across the membrane. Required to maintain the reduced state of SoxR. The sequence is that of Ion-translocating oxidoreductase complex subunit B from Salmonella arizonae (strain ATCC BAA-731 / CDC346-86 / RSK2980).